The following is an 88-amino-acid chain: MVKLRLKRCGKKQRAVYRIVAIDVRSRREGRDLWKVGFYDPINNKTYLDIPGILYFLEKGAQPTGTVYDILKKAGVFTEFSLNQMEVN.

It belongs to the bacterial ribosomal protein bS16 family.

It localises to the plastid. The protein localises to the chloroplast. The sequence is that of Small ribosomal subunit protein bS16c from Oenothera elata subsp. hookeri (Hooker's evening primrose).